The following is a 484-amino-acid chain: Aspartyl/glutamyl-tRNA(Asn/Gln) amidotransferase subunit B (484 aa).

Belongs to the GatB/GatE family. GatB subfamily. Heterotrimer of A, B and C subunits.

The catalysed reaction is L-glutamyl-tRNA(Gln) + L-glutamine + ATP + H2O = L-glutaminyl-tRNA(Gln) + L-glutamate + ADP + phosphate + H(+). The enzyme catalyses L-aspartyl-tRNA(Asn) + L-glutamine + ATP + H2O = L-asparaginyl-tRNA(Asn) + L-glutamate + ADP + phosphate + 2 H(+). Allows the formation of correctly charged Asn-tRNA(Asn) or Gln-tRNA(Gln) through the transamidation of misacylated Asp-tRNA(Asn) or Glu-tRNA(Gln) in organisms which lack either or both of asparaginyl-tRNA or glutaminyl-tRNA synthetases. The reaction takes place in the presence of glutamine and ATP through an activated phospho-Asp-tRNA(Asn) or phospho-Glu-tRNA(Gln). The polypeptide is Aspartyl/glutamyl-tRNA(Asn/Gln) amidotransferase subunit B (Anaeromyxobacter dehalogenans (strain 2CP-1 / ATCC BAA-258)).